The following is a 366-amino-acid chain: Fructose-bisphosphate aldolase 2 (366 aa).

Residues Arg60 and Lys150 each contribute to the substrate site. The Proton acceptor role is filled by Glu191. Lys233 acts as the Schiff-base intermediate with dihydroxyacetone-P in catalysis.

Belongs to the class I fructose-bisphosphate aldolase family.

The enzyme catalyses beta-D-fructose 1,6-bisphosphate = D-glyceraldehyde 3-phosphate + dihydroxyacetone phosphate. It functions in the pathway carbohydrate degradation; glycolysis; D-glyceraldehyde 3-phosphate and glycerone phosphate from D-glucose: step 4/4. The chain is Fructose-bisphosphate aldolase 2 (aldo-2) from Caenorhabditis elegans.